Consider the following 221-residue polypeptide: uncharacterized protein (221 aa).

An N-terminal signal peptide occupies residues Met1–Thr23. The disordered stretch occupies residues Glu67–Pro221. Positions Leu68 to Arg150 are enriched in basic and acidic residues. Positions Lys70–Ala161 form a coiled coil. The span at Ser152–Ala161 shows a compositional bias: polar residues. Positions Pro162 to Ser174 are enriched in low complexity. Over residues Gln175–Ala184 the composition is skewed to polar residues. A compositionally biased stretch (basic and acidic residues) spans Tyr195–Gln205.

This is an uncharacterized protein from Bacillus subtilis (strain 168).